The sequence spans 28 residues: Short cationic peptide-1c (28 aa).

The residue at position 28 (Glu28) is a Glutamic acid 1-amide.

Expressed by the venom gland.

Its subcellular location is the secreted. This chain is Short cationic peptide-1c, found in Cupiennius salei (American wandering spider).